Reading from the N-terminus, the 840-residue chain is E3 ubiquitin-protein ligase RNF19A (840 aa).

The interval 40 to 61 (SDRDLQSSTSSVSLPSVKKAPK) is disordered. Low complexity predominate over residues 45–56 (QSSTSSVSLPSV). Positions 128 to 351 (DFIECPLCLL…LSPSGCTFWG (224 aa)) are TRIAD supradomain. Residues C132, C135, C150, H152, C155, C158, C176, C179, C219, C224, C241, C246, C251, C254, H259, C264, C301, and C304 each contribute to the Zn(2+) site. The RING-type 1 zinc finger occupies 132–179 (CPLCLLRHSKDRFPDIMTCHHRSCVDCLRQYLRIEISESRVNISCPEC). The IBR-type zinc finger occupies 199 to 264 (EKYEEFMLRR…KQIWHPNQTC (66 aa)). The RING-type 2; atypical zinc finger occupies 301–332 (CPRCAAYIIKMNDGSCNHMTCAVCGCEFCWLC). C316 is an active-site residue. C321, C324, C329, C332, H340, and C347 together coordinate Zn(2+). 2 consecutive transmembrane segments (helical) span residues 368-388 (LVGA…AMII) and 424-444 (VIVS…IMLA). 3 disordered regions span residues 625–685 (FKFR…GNMK), 700–721 (QQST…PSVA), and 786–808 (CSDV…GGKP). Residue S631 is modified to Phosphoserine. The interval 660 to 840 (ATKWSKEATG…DLKVAVQTEI (181 aa)) is interaction with CASR. The segment covering 671-683 (KKSKSGKLRKKGN) has biased composition (basic residues). Positions 700–717 (QQSTNSSEFEAPSLSDSM) are enriched in polar residues.

Belongs to the RBR family. RNF19 subfamily. In terms of assembly, interacts with UBE2L3 and UBE2L6. Also interacts with transcription factor Sp1. Interacts with SNCAIP and CASR. Interacts with VCP.

The protein localises to the membrane. The protein resides in the cytoplasm. Its subcellular location is the cytoskeleton. It is found in the microtubule organizing center. It localises to the centrosome. The enzyme catalyses [E2 ubiquitin-conjugating enzyme]-S-ubiquitinyl-L-cysteine + [acceptor protein]-L-lysine = [E2 ubiquitin-conjugating enzyme]-L-cysteine + [acceptor protein]-N(6)-ubiquitinyl-L-lysine.. It functions in the pathway protein modification; protein ubiquitination. In terms of biological role, E3 ubiquitin-protein ligase which accepts ubiquitin from E2 ubiquitin-conjugating enzymes UBE2L3 and UBE2L6 in the form of a thioester and then directly transfers the ubiquitin to targeted substrates, such as SNCAIP or CASR. The chain is E3 ubiquitin-protein ligase RNF19A (Rnf19a) from Mus musculus (Mouse).